A 379-amino-acid polypeptide reads, in one-letter code: Pectin lyase A (379 aa).

A signal peptide spans 1-20; sequence MKTTFLVSLATAALSSTAAA. Intrachain disulfides connect cysteine 83–cysteine 102 and cysteine 92–cysteine 226. The active site involves arginine 256. Cysteine 323 and cysteine 331 are joined by a disulfide.

Belongs to the polysaccharide lyase 1 family.

It is found in the secreted. It carries out the reaction Eliminative cleavage of (1-&gt;4)-alpha-D-galacturonan methyl ester to give oligosaccharides with 4-deoxy-6-O-methyl-alpha-D-galact-4-enuronosyl groups at their non-reducing ends.. In terms of biological role, pectinolytic enzymes consist of four classes of enzymes: pectin lyase, polygalacturonase, pectin methylesterase and rhamnogalacturonase. Among pectinolytic enzymes, pectin lyase is the most important in depolymerization of pectin, since it cleaves internal glycosidic bonds of highly methylated pectins. In Emericella nidulans (strain FGSC A4 / ATCC 38163 / CBS 112.46 / NRRL 194 / M139) (Aspergillus nidulans), this protein is Pectin lyase A (pelA).